The primary structure comprises 1228 residues: Reverse gyrase (1228 aa).

The segment at 1–41 (MEVPLVAYLHSCPNCGGPITSDRLASGLPCRECLPDGAKAG) adopts an RG N-terminal-type zinc-finger fold. The Zn(2+) site is built by C12, C15, C30, and C33. Residues Q88 and 105–112 (APTGSGKT) contribute to the ATP site. One can recognise a Helicase ATP-binding domain in the interval 92 to 255 (ARRFVRGKSF…NLTKQLRKAE (164 aa)). The short motif at 211–214 (DDVD) is the DEAD box element. Residues 631 to 1228 (DLMRTILMVV…RKEVLPHLAS (598 aa)) form a topoisomerase I region. In terms of domain architecture, Toprim spans 635 to 809 (TILMVVESPT…DIRRVEFHEV (175 aa)). Residues E641 and D778 each contribute to the Mg(2+) site. The Topo IA-type catalytic domain occupies 825–1223 (NFSLVKAQIV…LYDEFRKEVL (399 aa)). Y967 serves as the catalytic O-(5'-phospho-DNA)-tyrosine intermediate.

The protein in the N-terminal section; belongs to the DEAD box helicase family. DDVD subfamily. This sequence in the C-terminal section; belongs to the type IA topoisomerase family. Monomer. The cofactor is Zn(2+). Mg(2+) serves as cofactor.

The protein localises to the cytoplasm. The catalysed reaction is ATP + H2O = ADP + phosphate + H(+). In terms of biological role, modifies the topological state of DNA by introducing positive supercoils in an ATP-dependent process, increasing the linking number in steps of +1. Binds to single-stranded DNA, transiently cleaves and then rejoins the ends, introducing a positive supercoil in the process. The scissile phosphodiester is attacked by the catalytic tyrosine of the enzyme, resulting in the formation of a DNA-(5'-phosphotyrosyl)-enzyme intermediate. Probably involved in rewinding DNA strands in regions of the chromosome that have opened up to allow replication, transcription, DNA repair and/or for DNA protection. The polypeptide is Reverse gyrase (Pyrobaculum aerophilum (strain ATCC 51768 / DSM 7523 / JCM 9630 / CIP 104966 / NBRC 100827 / IM2)).